Consider the following 320-residue polypeptide: Cytochrome f (320 aa).

Residues 1–35 (MQTRNTLSWIKEEITRSISVSLMIYIITWASISNA) form the signal peptide. Tyr-36, Cys-56, Cys-59, and His-60 together coordinate heme. The chain crosses the membrane as a helical span at residues 286–306 (VQGLLFFLASVVLAQIFLVLK).

Belongs to the cytochrome f family. As to quaternary structure, the 4 large subunits of the cytochrome b6-f complex are cytochrome b6, subunit IV (17 kDa polypeptide, petD), cytochrome f and the Rieske protein, while the 4 small subunits are PetG, PetL, PetM and PetN. The complex functions as a dimer. Requires heme as cofactor.

It localises to the plastid. The protein localises to the chloroplast thylakoid membrane. Component of the cytochrome b6-f complex, which mediates electron transfer between photosystem II (PSII) and photosystem I (PSI), cyclic electron flow around PSI, and state transitions. The chain is Cytochrome f from Carica papaya (Papaya).